We begin with the raw amino-acid sequence, 332 residues long: Ferredoxin--NADP reductase 2 (332 aa).

Residues D33, Q41, Y46, V86, I121, D282, and S325 each contribute to the FAD site.

It belongs to the ferredoxin--NADP reductase type 2 family. In terms of assembly, homodimer. The cofactor is FAD.

It catalyses the reaction 2 reduced [2Fe-2S]-[ferredoxin] + NADP(+) + H(+) = 2 oxidized [2Fe-2S]-[ferredoxin] + NADPH. The protein is Ferredoxin--NADP reductase 2 of Sulfolobus acidocaldarius (strain ATCC 33909 / DSM 639 / JCM 8929 / NBRC 15157 / NCIMB 11770).